A 231-amino-acid polypeptide reads, in one-letter code: uncharacterized protein (231 aa).

4 consecutive transmembrane segments (helical) span residues 39 to 59 (FCIS…YGPF), 70 to 90 (ALSL…VPVI), 156 to 176 (AIIS…GGSI), and 189 to 206 (IVAI…NMFF).

It belongs to the FliR/MopE/SpaR family.

Its subcellular location is the cell membrane. This is an uncharacterized protein from Escherichia coli (strain K12).